Here is a 433-residue protein sequence, read N- to C-terminus: Glutamyl-tRNA reductase (433 aa).

Substrate is bound by residues 49–52 (TCNR), S114, 119–121 (EPQ), and Q125. C50 serves as the catalytic Nucleophile. Residue 201–206 (GAGETI) participates in NADP(+) binding.

This sequence belongs to the glutamyl-tRNA reductase family. As to quaternary structure, homodimer.

It catalyses the reaction (S)-4-amino-5-oxopentanoate + tRNA(Glu) + NADP(+) = L-glutamyl-tRNA(Glu) + NADPH + H(+). The protein operates within porphyrin-containing compound metabolism; protoporphyrin-IX biosynthesis; 5-aminolevulinate from L-glutamyl-tRNA(Glu): step 1/2. Functionally, catalyzes the NADPH-dependent reduction of glutamyl-tRNA(Glu) to glutamate 1-semialdehyde (GSA). The chain is Glutamyl-tRNA reductase from Histophilus somni (strain 129Pt) (Haemophilus somnus).